Reading from the N-terminus, the 65-residue chain is UPF0434 protein Mmwyl1_2153 (65 aa).

This sequence belongs to the UPF0434 family.

The protein is UPF0434 protein Mmwyl1_2153 of Marinomonas sp. (strain MWYL1).